The following is a 100-amino-acid chain: MSQERLLKVLKAPHISEKATNNAEKSNTIVFKVALDANKVEITNAVEQLFEVKVDSVRTVVVKGKTKRRGAKIGRRSDWKKAYVTLQEGQSLDFVEGAAE.

It belongs to the universal ribosomal protein uL23 family. In terms of assembly, part of the 50S ribosomal subunit. Contacts protein L29, and trigger factor when it is bound to the ribosome.

One of the early assembly proteins it binds 23S rRNA. One of the proteins that surrounds the polypeptide exit tunnel on the outside of the ribosome. Forms the main docking site for trigger factor binding to the ribosome. This Aggregatibacter actinomycetemcomitans (Actinobacillus actinomycetemcomitans) protein is Large ribosomal subunit protein uL23.